Reading from the N-terminus, the 193-residue chain is Ion-translocating oxidoreductase complex subunit A (193 aa).

Transmembrane regions (helical) follow at residues 5–25, 39–59, 62–82, 102–122, 134–154, and 171–191; these read ALLFVSILLVNNFVLVKFLGL, IGMGMATTFVMTVGSMFSWLV, FILVPLDILYLRTMAFILVLA, LLGIFLPLITTNCAVLGVVLL, TIYGFGGAAGFSLVMVLFAAI, and SIALITAGLMSLAFMGFTGLV.

The protein belongs to the NqrDE/RnfAE family. In terms of assembly, the complex is composed of six subunits: RnfA, RnfB, RnfC, RnfD, RnfE and RnfG.

It localises to the cell inner membrane. Functionally, part of a membrane-bound complex that couples electron transfer with translocation of ions across the membrane. The chain is Ion-translocating oxidoreductase complex subunit A from Pectobacterium carotovorum subsp. carotovorum (strain PC1).